We begin with the raw amino-acid sequence, 576 residues long: Aspartate--tRNA ligase (576 aa).

Glu171 contacts L-aspartate. An aspartate region spans residues 195 to 198 (QLFK). Arg217 is a binding site for L-aspartate. ATP contacts are provided by residues 217–219 (RDE) and Gln226. L-aspartate is bound at residue His450. Glu484 contacts ATP. Arg491 is an L-aspartate binding site. 536–539 (GLDR) is a binding site for ATP.

This sequence belongs to the class-II aminoacyl-tRNA synthetase family. Type 1 subfamily. As to quaternary structure, homodimer.

The protein resides in the cytoplasm. The catalysed reaction is tRNA(Asp) + L-aspartate + ATP = L-aspartyl-tRNA(Asp) + AMP + diphosphate. Catalyzes the attachment of L-aspartate to tRNA(Asp) in a two-step reaction: L-aspartate is first activated by ATP to form Asp-AMP and then transferred to the acceptor end of tRNA(Asp). This Buchnera aphidicola subsp. Baizongia pistaciae (strain Bp) protein is Aspartate--tRNA ligase.